A 70-amino-acid polypeptide reads, in one-letter code: Translational regulator CsrA (70 aa).

It belongs to the CsrA/RsmA family. Homodimer; the beta-strands of each monomer intercalate to form a hydrophobic core, while the alpha-helices form wings that extend away from the core.

Its subcellular location is the cytoplasm. Its function is as follows. A translational regulator that binds mRNA to regulate translation initiation and/or mRNA stability. Usually binds in the 5'-UTR at or near the Shine-Dalgarno sequence preventing ribosome-binding, thus repressing translation. Its main target seems to be the major flagellin gene, while its function is anatagonized by FliW. This Rhodopirellula baltica (strain DSM 10527 / NCIMB 13988 / SH1) protein is Translational regulator CsrA.